We begin with the raw amino-acid sequence, 176 residues long: Major non-capsid protein (176 aa).

Belongs to the tenuiviruses NCP family.

It is found in the host cytoplasm. Induces the formation of large intracellular inclusion body, organized in amorphous and crystalline arrays. Presumably the main cause of the stripe disease observed in host. The protein is Major non-capsid protein of Rottboellia (Sorghum).